A 126-amino-acid polypeptide reads, in one-letter code: MPEPAKSAPAPKKGSKKAVTKAQKIDGKKRKRSRKESYSVYVYKVLKQVHPDTGISSKAMGIMNSFVNDIFERIAGEASRLAHYNKRSTITSREIQTAVRLLLPGELAKHAVSEGTKAVTKYTSAK.

The span at methionine 1 to lysine 12 shows a compositional bias: low complexity. Residues methionine 1–glutamate 36 form a disordered region. N-acetylproline is present on proline 2. Glutamate 3 bears the ADP-ribosyl glutamic acid mark. Lysine 6 bears the N6-(2-hydroxyisobutyryl)lysine; alternate mark. N6-(beta-hydroxybutyryl)lysine; alternate is present on lysine 6. Lysine 6 carries the post-translational modification N6-acetyllysine; alternate. Position 6 is an N6-butyryllysine; alternate (lysine 6). The residue at position 6 (lysine 6) is an N6-crotonyllysine; alternate. An N6-lactoyllysine; alternate modification is found at lysine 6. Residue lysine 6 forms a Glycyl lysine isopeptide (Lys-Gly) (interchain with G-Cter in SUMO2); alternate linkage. Serine 7 bears the ADP-ribosylserine mark. Lysine 12 is modified (N6-(beta-hydroxybutyryl)lysine; alternate). 2 positions are modified to N6-acetyllysine; alternate: lysine 12 and lysine 13. N6-crotonyllysine; alternate is present on residues lysine 12 and lysine 13. At lysine 12 the chain carries N6-lactoyllysine; alternate. At lysine 13 the chain carries N6-(2-hydroxyisobutyryl)lysine; alternate. Serine 15 carries the post-translational modification Phosphoserine; by STK4/MST1. Lysine 16, lysine 17, lysine 21, and lysine 24 each carry N6-acetyllysine; alternate. 5 positions are modified to N6-crotonyllysine; alternate: lysine 16, lysine 17, lysine 21, lysine 24, and lysine 35. An N6-lactoyllysine; alternate mark is found at lysine 16, lysine 17, lysine 21, and lysine 24. Lysine 17 carries the N6-glutaryllysine; alternate modification. An N6-(2-hydroxyisobutyryl)lysine; alternate mark is found at lysine 21, lysine 24, and lysine 35. The residue at position 21 (lysine 21) is an N6-(beta-hydroxybutyryl)lysine; alternate. N6-butyryllysine; alternate is present on lysine 21. A Glycyl lysine isopeptide (Lys-Gly) (interchain with G-Cter in SUMO2); alternate cross-link involves residue lysine 21. Lysine 35 is subject to N6-(beta-hydroxybutyryl)lysine; alternate. Position 35 is an N6-glutaryllysine; alternate (lysine 35). Lysine 35 is modified (N6-succinyllysine; alternate). Lysine 35 participates in a covalent cross-link: Glycyl lysine isopeptide (Lys-Gly) (interchain with G-Cter in ubiquitin); alternate. Glutamate 36 carries the post-translational modification PolyADP-ribosyl glutamic acid. The residue at position 37 (serine 37) is a Phosphoserine; by AMPK. N6-(2-hydroxyisobutyryl)lysine; alternate is present on residues lysine 44, lysine 47, and lysine 58. Position 44 is an N6-lactoyllysine; alternate (lysine 44). 2 positions are modified to N6-glutaryllysine; alternate: lysine 44 and lysine 47. Residue lysine 47 is modified to N6-methyllysine; alternate. Residue lysine 58 is modified to N6,N6-dimethyllysine; alternate. Arginine 80 is subject to Dimethylated arginine. Lysine 86 carries the post-translational modification N6-(2-hydroxyisobutyryl)lysine; alternate. Position 86 is an N6-acetyllysine; alternate (lysine 86). Position 86 is an N6-lactoyllysine; alternate (lysine 86). The residue at position 86 (lysine 86) is an N6,N6,N6-trimethyllysine; alternate. Residues arginine 87 and arginine 93 each carry the omega-N-methylarginine modification. Residue lysine 109 is modified to N6-(2-hydroxyisobutyryl)lysine; alternate. Residue lysine 109 is modified to N6-lactoyllysine; alternate. The residue at position 109 (lysine 109) is an N6-glutaryllysine; alternate. Residue lysine 109 is modified to N6-methyllysine; alternate. A glycan (O-linked (GlcNAc) serine) is linked at serine 113. Threonine 116 is modified (phosphothreonine). Residues lysine 117 and lysine 121 each carry the N6-(2-hydroxyisobutyryl)lysine; alternate modification. Lysine 117 carries the N6-(beta-hydroxybutyryl)lysine; alternate modification. Residues lysine 117 and lysine 121 each carry the N6-lactoyllysine; alternate modification. An N6-glutaryllysine; alternate mark is found at lysine 117 and lysine 121. 2 positions are modified to N6-succinyllysine; alternate: lysine 117 and lysine 121. Lysine 117 carries the N6-methylated lysine; alternate modification. Lysine 121 is covalently cross-linked (Glycyl lysine isopeptide (Lys-Gly) (interchain with G-Cter in ubiquitin); alternate).

This sequence belongs to the histone H2B family. The nucleosome is a histone octamer containing two molecules each of H2A, H2B, H3 and H4 assembled in one H3-H4 heterotetramer and two H2A-H2B heterodimers. The octamer wraps approximately 147 bp of DNA. Post-translationally, monoubiquitination at Lys-35 (H2BK34Ub) by the MSL1/MSL2 dimer is required for histone H3 'Lys-4' (H3K4me) and 'Lys-79' (H3K79me) methylation and transcription activation at specific gene loci, such as HOXA9 and MEIS1 loci. Similarly, monoubiquitination at Lys-121 (H2BK120Ub) by the RNF20/40 complex gives a specific tag for epigenetic transcriptional activation and is also prerequisite for histone H3 'Lys-4' and 'Lys-79' methylation. It also functions cooperatively with the FACT dimer to stimulate elongation by RNA polymerase II. H2BK120Ub also acts as a regulator of mRNA splicing: deubiquitination by USP49 is required for efficient cotranscriptional splicing of a large set of exons. In terms of processing, phosphorylated on Ser-15 (H2BS14ph) by STK4/MST1 during apoptosis; which facilitates apoptotic chromatin condensation. Also phosphorylated on Ser-15 in response to DNA double strand breaks (DSBs), and in correlation with somatic hypermutation and immunoglobulin class-switch recombination. Phosphorylation at Ser-37 (H2BS36ph) by AMPK in response to stress promotes transcription. GlcNAcylation at Ser-113 promotes monoubiquitination of Lys-121. It fluctuates in response to extracellular glucose, and associates with transcribed genes. Post-translationally, ADP-ribosylated by PARP1 or PARP2 on Ser-7 (H2BS6ADPr) in response to DNA damage. H2BS6ADPr promotes recruitment of CHD1L. Mono-ADP-ribosylated on Glu-3 (H2BE2ADPr) by PARP3 in response to single-strand breaks. Poly ADP-ribosylation on Glu-36 (H2BE35ADPr) by PARP1 regulates adipogenesis: it inhibits phosphorylation at Ser-37 (H2BS36ph), thereby blocking expression of pro-adipogenetic genes. In terms of processing, crotonylation (Kcr) is specifically present in male germ cells and marks testis-specific genes in post-meiotic cells, including X-linked genes that escape sex chromosome inactivation in haploid cells. Crotonylation marks active promoters and enhancers and confers resistance to transcriptional repressors. It is also associated with post-meiotically activated genes on autosomes. Lactylated in macrophages by EP300/P300 by using lactoyl-CoA directly derived from endogenous or exogenous lactate, leading to stimulates gene transcription.

The protein resides in the nucleus. Its subcellular location is the chromosome. In terms of biological role, core component of nucleosome. Nucleosomes wrap and compact DNA into chromatin, limiting DNA accessibility to the cellular machineries which require DNA as a template. Histones thereby play a central role in transcription regulation, DNA repair, DNA replication and chromosomal stability. DNA accessibility is regulated via a complex set of post-translational modifications of histones, also called histone code, and nucleosome remodeling. This Bos taurus (Bovine) protein is Histone H2B type 1-K.